The primary structure comprises 121 residues: Large ribosomal subunit protein uL14c (121 aa).

This sequence belongs to the universal ribosomal protein uL14 family. As to quaternary structure, part of the 50S ribosomal subunit.

Its subcellular location is the plastid. It localises to the apicoplast. In terms of biological role, binds to 23S rRNA. This Eimeria tenella (Coccidian parasite) protein is Large ribosomal subunit protein uL14c (rpl14).